The chain runs to 292 residues: NAD kinase (292 aa).

Asp73 functions as the Proton acceptor in the catalytic mechanism. Residues 73 to 74 (DG), 147 to 148 (NE), His158, Arg175, Asp177, 188 to 193 (TAYSLS), and Gln247 contribute to the NAD(+) site.

This sequence belongs to the NAD kinase family. Requires a divalent metal cation as cofactor.

The protein resides in the cytoplasm. The catalysed reaction is NAD(+) + ATP = ADP + NADP(+) + H(+). In terms of biological role, involved in the regulation of the intracellular balance of NAD and NADP, and is a key enzyme in the biosynthesis of NADP. Catalyzes specifically the phosphorylation on 2'-hydroxyl of the adenosine moiety of NAD to yield NADP. This Salmonella agona (strain SL483) protein is NAD kinase.